We begin with the raw amino-acid sequence, 343 residues long: Aspartate beta-hydroxylase domain-containing protein 2 (343 aa).

The Cytoplasmic segment spans residues Met1–Asp31. A helical membrane pass occupies residues Gly32 to Val52. Over Gly53–Arg343 the chain is Lumenal. N-linked (GlcNAc...) asparagine glycans are attached at residues Asn77 and Asn185. The 2-oxoglutarate site is built by Trp202 and Ser246. Position 257 (His257) interacts with Fe cation. Arg266–His268 contacts 2-oxoglutarate. His302 is a Fe cation binding site. Arg315 lines the 2-oxoglutarate pocket.

The protein belongs to the aspartyl/asparaginyl beta-hydroxylase family. Fe cation serves as cofactor.

The protein resides in the membrane. In terms of biological role, may function as 2-oxoglutarate-dependent dioxygenase. The chain is Aspartate beta-hydroxylase domain-containing protein 2 (Asphd2) from Rattus norvegicus (Rat).